A 209-amino-acid chain; its full sequence is Regulator of G-protein signaling 1 (209 aa).

The RGS domain maps to 85–200; that stretch reads SLEKLLANQT…LKSDIYLNLL (116 aa).

Interacts with GNAI1 and GNAQ. As to expression, detected in peripheral blood monocytes. Expression is relatively low in B-cells and chronic lymphocytic leukemia B-cells; however, in other types of malignant B-cell such as non-Hodgkin lymphoma and hairy cell leukemia, expression is constitutively high.

It is found in the cell membrane. Its subcellular location is the cytoplasm. It localises to the cytosol. In terms of biological role, regulates G protein-coupled receptor signaling cascades, including signaling downstream of the N-formylpeptide chemoattractant receptors and leukotriene receptors. Inhibits B cell chemotaxis toward CXCL12. Inhibits signal transduction by increasing the GTPase activity of G protein alpha subunits thereby driving them into their inactive GDP-bound form. The sequence is that of Regulator of G-protein signaling 1 (RGS1) from Homo sapiens (Human).